A 1085-amino-acid chain; its full sequence is KN motif and ankyrin repeat domain-containing protein 2 (1085 aa).

Basic and acidic residues predominate over residues 136 to 145 (KLEEEKDGRR). The interval 136 to 192 (KLEEEKDGRRFSNLGSMHSSMAGSNTSLSSAHSFNRAQGGGSYTPMSSGLSTPVSPT) is disordered. Polar residues-rich tracts occupy residues 148-171 (NLGS…SFNR) and 179-189 (TPMSSGLSTPV). Positions 196–216 (LQHVREQMAVALRKIRELEEQ) form a coiled coil. A disordered region spans residues 273-295 (NGAGAANKATGSLSPTTPGSLQD). The segment covering 281–295 (ATGSLSPTTPGSLQD) has biased composition (polar residues). Residues 356–383 (VGLLEVQLRKTMQELQSAQQQVEAAQKE) adopt a coiled-coil conformation. Disordered stretches follow at residues 557-736 (RKAD…SNVQ), 752-791 (TTTQ…SAKQ), and 798-817 (TTKP…TDSL). Acidic residues predominate over residues 589–600 (SSSESSEDESDA). Residues 601–611 (SEYHEATEKLP) are compositionally biased toward basic and acidic residues. Residues 614-648 (ATPQSLVSSCIPQLASETPATQTAQHSTAQIPTNH) show a composition bias toward polar residues. Residues 649-668 (TPAAQTTSQSHTTDATTQQH) are compositionally biased toward low complexity. Composition is skewed to polar residues over residues 706–736 (NPPS…SNVQ) and 760–788 (SAKP…TDGS). The span at 798–810 (TTKPAADTATPPT) shows a compositional bias: low complexity. ANK repeat units follow at residues 895–925 (NGNT…NADK), 929–962 (AGYT…DVNA), 967–996 (AGQT…QVNL), 1000–1030 (DGST…DATL), and 1034–1063 (DGST…FAKP). The segment at 1064–1085 (PSPVSPKSPILGSSPPSSSELK) is disordered. Over residues 1070 to 1085 (KSPILGSSPPSSSELK) the composition is skewed to low complexity.

It localises to the cytoplasm. It is found in the mitochondrion. May be involved in different biological processes including transcription and apoptosis by sequestering specific proteins outside of the nucleus. Involved in actin stress fibers formation probably through its interaction with ARHGDIA and the regulation of the Rho signaling pathway. May thereby play a role in cell adhesion and migration, regulating for instance podocytes migration during development of the kidney. This Danio rerio (Zebrafish) protein is KN motif and ankyrin repeat domain-containing protein 2 (kank2).